The sequence spans 340 residues: Ketol-acid reductoisomerase (NADP(+)) (340 aa).

The KARI N-terminal Rossmann domain occupies 3-182 (VTMYYEEDVE…GCARVGIIET (180 aa)). Residues 26–29 (YGSQ), Arg49, Ser53, and 83–86 (DELQ) contribute to the NADP(+) site. The active site involves His108. Gly134 provides a ligand contact to NADP(+). Residues 183–328 (TFKEETEEDL…AELRKAMPFT (146 aa)) form the KARI C-terminal knotted domain. The Mg(2+) site is built by Asp191, Glu195, Glu227, and Glu231. Residue Ser252 participates in substrate binding.

Belongs to the ketol-acid reductoisomerase family. Mg(2+) serves as cofactor.

It catalyses the reaction (2R)-2,3-dihydroxy-3-methylbutanoate + NADP(+) = (2S)-2-acetolactate + NADPH + H(+). The enzyme catalyses (2R,3R)-2,3-dihydroxy-3-methylpentanoate + NADP(+) = (S)-2-ethyl-2-hydroxy-3-oxobutanoate + NADPH + H(+). It functions in the pathway amino-acid biosynthesis; L-isoleucine biosynthesis; L-isoleucine from 2-oxobutanoate: step 2/4. Its pathway is amino-acid biosynthesis; L-valine biosynthesis; L-valine from pyruvate: step 2/4. Its function is as follows. Involved in the biosynthesis of branched-chain amino acids (BCAA). Catalyzes an alkyl-migration followed by a ketol-acid reduction of (S)-2-acetolactate (S2AL) to yield (R)-2,3-dihydroxy-isovalerate. In the isomerase reaction, S2AL is rearranged via a Mg-dependent methyl migration to produce 3-hydroxy-3-methyl-2-ketobutyrate (HMKB). In the reductase reaction, this 2-ketoacid undergoes a metal-dependent reduction by NADPH to yield (R)-2,3-dihydroxy-isovalerate. The chain is Ketol-acid reductoisomerase (NADP(+)) from Lactococcus lactis subsp. cremoris (strain MG1363).